The primary structure comprises 386 residues: Demethylsterigmatocystin 6-O-methyltransferase (386 aa).

137 to 150 provides a ligand contact to substrate; the sequence is FDISGPCTQILPDF. The tract at residues 177–197 is substrate binding; that stretch reads MFEWMPQHPKHMESLGHLMAL. S-adenosyl-L-methionine is bound by residues 228 to 229, Asp-253, 273 to 274, and Arg-289; these read GG and NF. His-293 functions as the Proton acceptor in the catalytic mechanism.

The protein belongs to the class I-like SAM-binding methyltransferase superfamily. Cation-independent O-methyltransferase family. COMT subfamily.

The catalysed reaction is 6-demethylsterigmatocystin + S-adenosyl-L-methionine = sterigmatocystin + S-adenosyl-L-homocysteine + H(+). It functions in the pathway mycotoxin biosynthesis; aflatoxin biosynthesis. Functionally, demethylsterigmatocystin 6-O-methyltransferase; part of the gene cluster that mediates the biosynthesis of aflatoxins, a group of polyketide-derived furanocoumarins, and part of the most toxic and carcinogenic compounds among the known mycotoxins. The four major aflatoxins produced by A.parasiticus are aflatoxin B1 (AFB1), aflatoxin B2 (AFB2), aflatoxin G1 (AFG1) and aflatoxin G2 (AFG2). Within the aflatoxin pathway, the methyltransferase aflO then catalyzes the modification of demethylsterigmatocystin (DMST) to sterigmatocystin (ST), and of dihydrodemethylsterigmatocystin (DMDHST) to dihydrosterigmatocystin (DHST). The biosynthesis of aflatoxins begins with the norsolorinic acid synthase aflC that combines a hexanoyl starter unit produced by the fatty acid synthase aflA/aflB and 7 malonyl-CoA extender units to synthesize the precursor NOR. The second step is the conversion of NOR to averantin and requires the norsolorinic acid ketoreductase aflD, which catalyzes the dehydration of norsolorinic acid to form (1'S)-averantin. The norsolorinic acid reductases aflE and aflF may also play a role in the conversion of NOR to AVN. The cytochrome P450 monooxygenase aflG then catalyzes the hydroxylation of AVN to 5'hydroxyaverantin (HAVN). The next step is performed by the 5'-hydroxyaverantin dehydrogenase aflH that transforms HAVN to 5'-oxoaverantin (OAVN) which is further converted to averufin (AVF) by aflK that plays a dual role in the pathway, as a 5'-oxoaverantin cyclase that mediates conversion of 5'-oxoaverantin, as well as a versicolorin B synthase in a later step in the pathway. The averufin oxidase aflI catalyzes the conversion of AVF to versiconal hemiacetal acetate (VHA). VHA is then the substrate for the versiconal hemiacetal acetate esterase aflJ to yield versiconal (VAL). Versicolorin B synthase aflK then converts VAL to versicolorin B (VERB) by closing the bisfuran ring of aflatoxin which is required for DNA-binding, thus giving to aflatoxin its activity as a mutagen. Then, the activity of the versicolorin B desaturase aflL leads to versicolorin A (VERA). A branch point starts from VERB since it can also be converted to dihydrodemethylsterigmatocystin (DMDHST), probably also by aflL, VERA being a precursor for aflatoxins B1 and G1, and DMDHST for aflatoxins B2 and G2. Next, the versicolorin reductase aflM and the cytochrome P450 monooxygenase aflN are involved in conversion of VERA to demethylsterigmatocystin (DMST). AflX and aflY seem also involved in this step, through probable aflX-mediated epoxide ring-opening step following versicolorin A oxidation and aflY-mediated Baeyer-Villiger oxidation required for the formation of the xanthone ring. The methyltransferase aflO then leads to the modification of DMST to sterigmatocystin (ST), and of DMDHST to dihydrosterigmatocystin (DHST). Both ST and DHST are then substrates of the O-methyltransferase aflP to yield O-methylsterigmatocystin (OMST) and dihydro-O-methylsterigmatocystin (DHOMST), respectively. Finally OMST is converted to aflatoxins B1 and G1, and DHOMST to aflatoxins B2 and G2, via the action of several enzymes including O-methylsterigmatocystin oxidoreductase aflQ, the cytochrome P450 monooxygenase aflU, but also the NADH-dependent flavin oxidoreductase nadA which is specifically required for the synthesis of AFG1. This chain is Demethylsterigmatocystin 6-O-methyltransferase, found in Aspergillus parasiticus (strain ATCC 56775 / NRRL 5862 / SRRC 143 / SU-1).